The chain runs to 480 residues: ATP synthase subunit beta, chloroplastic (480 aa).

An ATP-binding site is contributed by 161 to 168 (GGAGVGKT).

It belongs to the ATPase alpha/beta chains family. As to quaternary structure, F-type ATPases have 2 components, CF(1) - the catalytic core - and CF(0) - the membrane proton channel. CF(1) has five subunits: alpha(3), beta(3), gamma(1), delta(1), epsilon(1). CF(0) has four main subunits: a(1), b(1), b'(1) and c(9-12).

It is found in the plastid. It localises to the chloroplast thylakoid membrane. It carries out the reaction ATP + H2O + 4 H(+)(in) = ADP + phosphate + 5 H(+)(out). In terms of biological role, produces ATP from ADP in the presence of a proton gradient across the membrane. The catalytic sites are hosted primarily by the beta subunits. In Tetradesmus obliquus (Green alga), this protein is ATP synthase subunit beta, chloroplastic.